Here is a 417-residue protein sequence, read N- to C-terminus: Cyanophycinase (417 aa).

Residues 1–23 (MIRSFIRSSALLLALLPVTGYSA) form the signal peptide. Residues S169, D188, and H222 each act as charge relay system in the active site.

Belongs to the peptidase S51 family.

It localises to the secreted. The catalysed reaction is [L-4-(L-arginin-2-N-yl)aspartate](n) + H2O = [L-4-(L-arginin-2-N-yl)aspartate](n-1) + L-4-(L-arginin-2-N-yl)aspartate. Its activity is regulated as follows. Inhibited by serine protease inhibitors. Inhibited by N-Bromo-succinimide. Functionally, exopeptidase that catalyzes the hydrolytic cleavage of multi-L-arginyl-poly-L-aspartic acid (cyanophycin; a water-insoluble reserve polymer) into aspartate-arginine dipeptides. The protein is Cyanophycinase (cphE) of Pseudomonas anguilliseptica.